The primary structure comprises 662 residues: UvrABC system protein B (662 aa).

A Helicase ATP-binding domain is found at 31–188 (DNIEGGEKAQ…NDLVDIQFER (158 aa)). 44–51 (GATGTGKT) is an ATP binding site. A Beta-hairpin motif is present at residues 97–120 (YYDYYQPEAYVPSSDTYIEKDSSV). A Helicase C-terminal domain is found at 435-601 (QIDDLLGEIN…TIKKEIRDLI (167 aa)). A UVR domain is found at 626-661 (KDMIKKLEGQMQEAAGLLDFELAAQIRDMILEIKAM).

Belongs to the UvrB family. As to quaternary structure, forms a heterotetramer with UvrA during the search for lesions. Interacts with UvrC in an incision complex.

It localises to the cytoplasm. Its function is as follows. The UvrABC repair system catalyzes the recognition and processing of DNA lesions. A damage recognition complex composed of 2 UvrA and 2 UvrB subunits scans DNA for abnormalities. Upon binding of the UvrA(2)B(2) complex to a putative damaged site, the DNA wraps around one UvrB monomer. DNA wrap is dependent on ATP binding by UvrB and probably causes local melting of the DNA helix, facilitating insertion of UvrB beta-hairpin between the DNA strands. Then UvrB probes one DNA strand for the presence of a lesion. If a lesion is found the UvrA subunits dissociate and the UvrB-DNA preincision complex is formed. This complex is subsequently bound by UvrC and the second UvrB is released. If no lesion is found, the DNA wraps around the other UvrB subunit that will check the other stand for damage. The chain is UvrABC system protein B from Streptococcus gordonii (strain Challis / ATCC 35105 / BCRC 15272 / CH1 / DL1 / V288).